The sequence spans 584 residues: Pentatricopeptide repeat-containing protein At2g01510, mitochondrial (584 aa).

A mitochondrion-targeting transit peptide spans 1–20; it reads MLAKQTPLTKQMLSELLRAS. PPR repeat units lie at residues 73–107, 108–142, 143–173, 174–208, 209–243, 244–274, 275–309, 310–344, and 348–378; these read RIFLWNTLFKGYVRNQLPFESLLLYKKMRDLGVRP, DEFTYPFVVKAISQLGDFSCGFALHAHVVKYGFGC, LGIVATELVMMYMKFGELSSAEFLFESMQVK, DLVAWNAFLAVCVQTGNSAIALEYFNKMCADAVQF, DSFTVVSMLSACGQLGSLEIGEEIYDRARKEEIDC, NIIVENARLDMHLKCGNTEAARVLFEEMKQR, NVVSWSTMIVGYAMNGDSREALTLFTTMQNEGLRP, NYVTFLGVLSACSHAGLVNEGKRYFSLMVQSNDKN, and RKEHYACMVDLLGRSGLLEEAYEFIKKMPVE. The segment at 383–458 is type E motif; the sequence is IWGALLGACA…VAAYSSVEFE (76 aa). The interval 459–489 is type E(+) motif; sequence GKIHFFNRGDKSHPQSKAIYEKLDEILKKIR. The segment at 490–584 is type DYW motif; it reads KMGYVPDTCS…NGVCSCKEFW (95 aa).

Belongs to the PPR family. PCMP-H subfamily.

It localises to the mitochondrion. The sequence is that of Pentatricopeptide repeat-containing protein At2g01510, mitochondrial (PCMP-H37) from Arabidopsis thaliana (Mouse-ear cress).